Consider the following 455-residue polypeptide: tRNA modification GTPase MnmE (455 aa).

(6S)-5-formyl-5,6,7,8-tetrahydrofolate contacts are provided by R24, E86, and R125. The region spanning 220-376 (GLTVAIIGRP…LETAILETVQ (157 aa)) is the TrmE-type G domain. N230 provides a ligand contact to K(+). GTP is bound by residues 230 to 235 (NVGKSS), 249 to 255 (TDLPGTT), and 274 to 277 (DTAG). Residue S234 participates in Mg(2+) binding. K(+) is bound by residues T249, L251, and T254. T255 contacts Mg(2+). A (6S)-5-formyl-5,6,7,8-tetrahydrofolate-binding site is contributed by K455.

The protein belongs to the TRAFAC class TrmE-Era-EngA-EngB-Septin-like GTPase superfamily. TrmE GTPase family. Homodimer. Heterotetramer of two MnmE and two MnmG subunits. It depends on K(+) as a cofactor.

It is found in the cytoplasm. In terms of biological role, exhibits a very high intrinsic GTPase hydrolysis rate. Involved in the addition of a carboxymethylaminomethyl (cmnm) group at the wobble position (U34) of certain tRNAs, forming tRNA-cmnm(5)s(2)U34. This chain is tRNA modification GTPase MnmE, found in Acaryochloris marina (strain MBIC 11017).